An 871-amino-acid chain; its full sequence is Protein argonaute-2 (871 aa).

The 120-residue stretch at 232–351 (PVIEFMCEVL…LPLEVCNIVA (120 aa)) folds into the PAZ domain. Interaction with guide RNA stretches follow at residues 314–319 (YFKDRH) and 536–578 (GKTP…LCLK). Residues 529–830 (LVVVILPGKT…VAFRARYHLV (302 aa)) enclose the Piwi domain. Residues 599–602 (FQQP) are interaction with GW182 family members. Asp609 provides a ligand contact to a divalent metal cation. The interval 662-672 (LIQFYKSTRFK) is interaction with GW182 family members. An a divalent metal cation-binding site is contributed by Asp681. 3 interaction with guide RNA regions span residues 721–722 (KR), 765–773 (HAGIQGTSR), and 802–824 (YVRC…VAFR). Position 819 (His819) interacts with a divalent metal cation. A disordered region spans residues 834–856 (HDSAEGSHTSGQSNGRDQQALAK). Over residues 839–850 (GSHTSGQSNGRD) the composition is skewed to polar residues.

It belongs to the argonaute family. Ago subfamily. As to quaternary structure, component of the RISC loading complex (RLC), or micro-RNA (miRNA) loading complex (miRLC), which is composed of dicer1, ago2 and tarbp2. Note that the trimeric RLC/miRLC is also referred to as RISC. Mg(2+) serves as cofactor. It depends on Mn(2+) as a cofactor.

Its subcellular location is the cytoplasm. The protein resides in the P-body. The enzyme catalyses Endonucleolytic cleavage to 5'-phosphomonoester.. Required for RNA-mediated gene silencing (RNAi) by the RNA-induced silencing complex (RISC). The 'minimal RISC' appears to include ago2 bound to a short guide RNA such as a microRNA (miRNA) or short interfering RNA (siRNA). These guide RNAs direct RISC to complementary mRNAs that are targets for RISC-mediated gene silencing. The precise mechanism of gene silencing depends on the degree of complementarity between the miRNA or siRNA and its target. Binding of RISC to a perfectly complementary mRNA generally results in silencing due to endonucleolytic cleavage of the mRNA specifically by ago2. Binding of RISC to a partially complementary mRNA results in silencing through inhibition of translation, and this is independent of endonuclease activity. The inhibition of translational initiation leads to the accumulation of the affected mRNA in cytoplasmic processing bodies (P-bodies), where mRNA degradation may subsequently occur. The chain is Protein argonaute-2 (ago2) from Xenopus tropicalis (Western clawed frog).